Here is a 490-residue protein sequence, read N- to C-terminus: ATP synthase subunit beta, chloroplastic (490 aa).

170-177 (GGAGVGKT) contacts ATP.

Belongs to the ATPase alpha/beta chains family. As to quaternary structure, F-type ATPases have 2 components, CF(1) - the catalytic core - and CF(0) - the membrane proton channel. CF(1) has five subunits: alpha(3), beta(3), gamma(1), delta(1), epsilon(1). CF(0) has four main subunits: a(1), b(1), b'(1) and c(9-12).

The protein resides in the plastid. The protein localises to the chloroplast thylakoid membrane. The catalysed reaction is ATP + H2O + 4 H(+)(in) = ADP + phosphate + 5 H(+)(out). In terms of biological role, produces ATP from ADP in the presence of a proton gradient across the membrane. The catalytic sites are hosted primarily by the beta subunits. The sequence is that of ATP synthase subunit beta, chloroplastic from Convolvulus arvensis (Field bindweed).